Here is a 178-residue protein sequence, read N- to C-terminus: Membrane-spanning protein YciB (178 aa).

The next 5 helical transmembrane spans lie at 22–42, 52–72, 76–96, 121–141, and 151–171; these read IFIA…ITSI, LINL…HNSS, WKVT…YLFI, LFWS…ILYF, and IFGL…YIYF.

Belongs to the YciB family.

The protein localises to the cell membrane. Plays a role in cell envelope biogenesis, maintenance of cell envelope integrity and membrane homeostasis. The sequence is that of Membrane-spanning protein YciB from Buchnera aphidicola subsp. Baizongia pistaciae (strain Bp).